A 231-amino-acid chain; its full sequence is Non-fluorescent flavoprotein (231 aa).

The protein belongs to the bacterial luciferase oxidoreductase family. As to quaternary structure, homodimer. Requires FMN as cofactor.

This chain is Non-fluorescent flavoprotein (luxF), found in Photobacterium phosphoreum.